A 244-amino-acid chain; its full sequence is NAD(P)H-quinone oxidoreductase subunit K (244 aa).

[4Fe-4S] cluster contacts are provided by C60, C61, C125, and C156. Positions 213-244 (KSEKSIESSKLNPVEESSENIYETNSIDEVIK) are disordered. A compositionally biased stretch (polar residues) spans 231-244 (ENIYETNSIDEVIK).

The protein belongs to the complex I 20 kDa subunit family. In terms of assembly, NDH-1 can be composed of about 15 different subunits; different subcomplexes with different compositions have been identified which probably have different functions. It depends on [4Fe-4S] cluster as a cofactor.

The protein resides in the cellular thylakoid membrane. It catalyses the reaction a plastoquinone + NADH + (n+1) H(+)(in) = a plastoquinol + NAD(+) + n H(+)(out). The enzyme catalyses a plastoquinone + NADPH + (n+1) H(+)(in) = a plastoquinol + NADP(+) + n H(+)(out). In terms of biological role, NDH-1 shuttles electrons from an unknown electron donor, via FMN and iron-sulfur (Fe-S) centers, to quinones in the respiratory and/or the photosynthetic chain. The immediate electron acceptor for the enzyme in this species is believed to be plastoquinone. Couples the redox reaction to proton translocation, and thus conserves the redox energy in a proton gradient. Cyanobacterial NDH-1 also plays a role in inorganic carbon-concentration. The polypeptide is NAD(P)H-quinone oxidoreductase subunit K (Prochlorococcus marinus subsp. pastoris (strain CCMP1986 / NIES-2087 / MED4)).